An 84-amino-acid polypeptide reads, in one-letter code: Polcalcin Ole e 3 (84 aa).

2 EF-hand domains span residues 6 to 40 (QEVA…TLGS) and 41 to 76 (VTPE…NRGL). Positions 19, 21, 23, 25, 30, 54, 56, 58, and 65 each coordinate Ca(2+).

Expressed exclusively in mature pollen.

The protein localises to the endomembrane system. The polypeptide is Polcalcin Ole e 3 (OLE3) (Olea europaea (Common olive)).